The primary structure comprises 204 residues: Probable nicotinate-nucleotide adenylyltransferase (204 aa).

This sequence belongs to the NadD family.

The enzyme catalyses nicotinate beta-D-ribonucleotide + ATP + H(+) = deamido-NAD(+) + diphosphate. Its pathway is cofactor biosynthesis; NAD(+) biosynthesis; deamido-NAD(+) from nicotinate D-ribonucleotide: step 1/1. Its function is as follows. Catalyzes the reversible adenylation of nicotinate mononucleotide (NaMN) to nicotinic acid adenine dinucleotide (NaAD). This is Probable nicotinate-nucleotide adenylyltransferase from Dehalococcoides mccartyi (strain ATCC BAA-2266 / KCTC 15142 / 195) (Dehalococcoides ethenogenes (strain 195)).